We begin with the raw amino-acid sequence, 247 residues long: Triosephosphate isomerase (247 aa).

10-12 (NWK) serves as a coordination point for substrate. The active-site Electrophile is the H92. E164 functions as the Proton acceptor in the catalytic mechanism. Substrate-binding positions include G170, S209, and 230–231 (GG).

This sequence belongs to the triosephosphate isomerase family. Homodimer.

The protein localises to the cytoplasm. The enzyme catalyses D-glyceraldehyde 3-phosphate = dihydroxyacetone phosphate. Its pathway is carbohydrate biosynthesis; gluconeogenesis. It participates in carbohydrate degradation; glycolysis; D-glyceraldehyde 3-phosphate from glycerone phosphate: step 1/1. Functionally, involved in the gluconeogenesis. Catalyzes stereospecifically the conversion of dihydroxyacetone phosphate (DHAP) to D-glyceraldehyde-3-phosphate (G3P). The chain is Triosephosphate isomerase from Alcanivorax borkumensis (strain ATCC 700651 / DSM 11573 / NCIMB 13689 / SK2).